The primary structure comprises 129 residues: Small ribosomal subunit protein uS11 (129 aa).

The protein belongs to the universal ribosomal protein uS11 family. In terms of assembly, part of the 30S ribosomal subunit. Interacts with proteins S7 and S18. Binds to IF-3.

Located on the platform of the 30S subunit, it bridges several disparate RNA helices of the 16S rRNA. Forms part of the Shine-Dalgarno cleft in the 70S ribosome. The protein is Small ribosomal subunit protein uS11 of Limosilactobacillus reuteri (strain DSM 20016) (Lactobacillus reuteri).